The chain runs to 334 residues: Glyceraldehyde-3-phosphate dehydrogenase (334 aa).

NAD(+) contacts are provided by residues 10-11 (RI), aspartate 33, lysine 77, and threonine 119. Residues 149 to 151 (SCT), threonine 180, 209 to 210 (TG), and arginine 232 each bind D-glyceraldehyde 3-phosphate. Cysteine 150 (nucleophile) is an active-site residue. Asparagine 314 is a binding site for NAD(+).

Belongs to the glyceraldehyde-3-phosphate dehydrogenase family. In terms of assembly, homotetramer.

The protein resides in the cytoplasm. It catalyses the reaction D-glyceraldehyde 3-phosphate + phosphate + NAD(+) = (2R)-3-phospho-glyceroyl phosphate + NADH + H(+). It functions in the pathway carbohydrate degradation; glycolysis; pyruvate from D-glyceraldehyde 3-phosphate: step 1/5. Its function is as follows. Catalyzes the oxidative phosphorylation of glyceraldehyde 3-phosphate (G3P) to 1,3-bisphosphoglycerate (BPG) using the cofactor NAD. The first reaction step involves the formation of a hemiacetal intermediate between G3P and a cysteine residue, and this hemiacetal intermediate is then oxidized to a thioester, with concomitant reduction of NAD to NADH. The reduced NADH is then exchanged with the second NAD, and the thioester is attacked by a nucleophilic inorganic phosphate to produce BPG. The sequence is that of Glyceraldehyde-3-phosphate dehydrogenase (gap) from Chlamydia trachomatis serovar L2 (strain ATCC VR-902B / DSM 19102 / 434/Bu).